A 411-amino-acid polypeptide reads, in one-letter code: Serpin A3-5 (411 aa).

A signal peptide spans 1 to 24 (MRAERTSFLLALGLLMAGIRSVHC). Asn-100, Asn-180, Asn-230, Asn-264, and Asn-318 each carry an N-linked (GlcNAc...) asparagine glycan.

This sequence belongs to the serpin family. In terms of assembly, homodimer.

It localises to the cytoplasmic vesicle. The protein localises to the secretory vesicle. It is found in the chromaffin granule. Its subcellular location is the secreted. Serine protease inhibitor. This chain is Serpin A3-5, found in Bos taurus (Bovine).